The sequence spans 103 residues: Small ribosomal subunit protein uS10 (103 aa).

Belongs to the universal ribosomal protein uS10 family. As to quaternary structure, part of the 30S ribosomal subunit.

Its function is as follows. Involved in the binding of tRNA to the ribosomes. This chain is Small ribosomal subunit protein uS10, found in Laribacter hongkongensis (strain HLHK9).